Consider the following 83-residue polypeptide: U20-theraphotoxin-Cg1a 1 (83 aa).

The signal sequence occupies residues 1–21; it reads MKVSVLITLAVLGVMFVWTSA. Residues 22 to 47 constitute a propeptide that is removed on maturation; sequence AELEERGSDQPAWLKSLERIFQSEER. 3 disulfide bridges follow: C49–C63, C56–C68, and C62–C76.

This sequence belongs to the neurotoxin 10 (Hwtx-1) family. 40 (Jztx-35) subfamily. As to expression, expressed by the venom gland.

It localises to the secreted. Functionally, probable ion channel inhibitor. The protein is U20-theraphotoxin-Cg1a 1 of Chilobrachys guangxiensis (Chinese earth tiger tarantula).